The following is a 250-amino-acid chain: MGRAPAKRKPSSPPPPPPPGRCHFWLPNKRRHCANTPLPTSQYCGNHLPDSASDAGAPFRRLVPCPVDPSHTVLEENLEAHVGKCPLKKQAAALAAQPFYSKGINSGGGEGGGGVTSAAKRALVHKLTKDELRALIEKIKLAHASAAMAMRDSFLVTDACDNWMRNQVDRKVPYQEKHVTQQASIIGNMEAFGLLQKGGEVAEENGVKNAPAVVEFGAGRGYLTQMLADCYGIRNVFLVERRSYKLKLKI.

Positions 1–10 are enriched in basic residues; that stretch reads MGRAPAKRKP. The interval 1–20 is disordered; that stretch reads MGRAPAKRKPSSPPPPPPPG. Over residues 11–20 the composition is skewed to pro residues; sequence SSPPPPPPPG. A CHHC U11-48K-type zinc finger spans residues 62-89; it reads LVPCPVDPSHTVLEENLEAHVGKCPLKK. Residues Cys-65, His-71, His-81, and Cys-85 each contribute to the Zn(2+) site.

It belongs to the methyltransferase TRM13 family.

It localises to the nucleus. The protein localises to the cytoplasm. The enzyme catalyses cytidine(4) in tRNA(Pro) + S-adenosyl-L-methionine = 2'-O-methylcytidine(4) in tRNA(Pro) + S-adenosyl-L-homocysteine + H(+). The catalysed reaction is cytidine(4) in tRNA(Gly)(GCC) + S-adenosyl-L-methionine = 2'-O-methylcytidine(4) in tRNA(Gly)(GCC) + S-adenosyl-L-homocysteine + H(+). It carries out the reaction adenosine(4) in tRNA(His) + S-adenosyl-L-methionine = 2'-O-methyladenosine(4) in tRNA(His) + S-adenosyl-L-homocysteine + H(+). In terms of biological role, tRNA methylase that catalyzes 2'-O-methyladenosine (Am) nucleoside formation on tRNA(Gly)(GCC) in vitro. May 2'-O-methylate cytidine(4) in tRNA(Pro) and tRNA(Gly)(GCC), and adenosine(4) in tRNA(His). Involved in salt stress tolerance. This Oryza sativa subsp. japonica (Rice) protein is tRNA:m(4)X modification enzyme TRM13.